The chain runs to 156 residues: Putative type II restriction enzyme ApeKORF2002P (156 aa).

The protein to M.jannaschii MJ1199.

It carries out the reaction Endonucleolytic cleavage of DNA to give specific double-stranded fragments with terminal 5'-phosphates.. In terms of biological role, a putative type II restriction enzyme, its methylase would be APE_2002. The sequence is that of Putative type II restriction enzyme ApeKORF2002P from Aeropyrum pernix (strain ATCC 700893 / DSM 11879 / JCM 9820 / NBRC 100138 / K1).